We begin with the raw amino-acid sequence, 184 residues long: Ras-related protein Rap-1b (184 aa).

A GTP-binding site is contributed by 10-18 (GSGGVGKSA). The segment at 25–67 (QGIFVEKYDPTIEDSYRKQVEVDAQQCMLEILDTAGTEQFTAM) is interaction with KRIT1. The Effector region signature appears at 32-40 (YDPTIEDSY). An ADP-ribosylserine; by botulinum toxin modification is found at Ser-39. GTP contacts are provided by residues 57–61 (DTAGT), 116–119 (NKCD), and 147–149 (SAK). Ser-179 bears the Phosphoserine; by PKA mark. Cys-181 carries the cysteine methyl ester modification. Cys-181 carries the S-geranylgeranyl cysteine lipid modification. Positions 182–184 (QLL) are cleaved as a propeptide — removed in mature form.

The protein belongs to the small GTPase superfamily. Ras family. In terms of assembly, heterodimer with RAP1GAP. Interacts with EPAC2. Interacts with SGSM1. Interacts with SGSM2. Interacts with SGSM3. Interacts with KRIT1. Interacts with RAP1GDS1.

The protein localises to the cell membrane. It localises to the cytoplasm. Its subcellular location is the cytosol. It is found in the cell junction. The catalysed reaction is GTP + H2O = GDP + phosphate + H(+). Its activity is regulated as follows. Activated by guanine nucleotide-exchange factor (GEF) EPAC2 in a cAMP-dependent manner. GTP-binding protein that possesses intrinsic GTPase activity. Contributes to the polarizing activity of KRIT1 and CDH5 in the establishment and maintenance of correct endothelial cell polarity and vascular lumen. Required for the localization of phosphorylated PRKCZ, PARD3 and TIAM1 to the cell junction. Plays a role in the establishment of basal endothelial barrier function. The sequence is that of Ras-related protein Rap-1b (Rap1b) from Rattus norvegicus (Rat).